The sequence spans 104 residues: Protein RnfH (104 aa).

It belongs to the UPF0125 (RnfH) family.

The protein is Protein RnfH of Pseudomonas fluorescens (strain ATCC BAA-477 / NRRL B-23932 / Pf-5).